A 342-amino-acid polypeptide reads, in one-letter code: Anthranilate phosphoribosyltransferase (342 aa).

Residues G79, 82 to 83, T87, 89 to 92, 107 to 115, and S119 each bind 5-phospho-alpha-D-ribose 1-diphosphate; these read GD, NVST, and KHGNRAATS. G79 contacts anthranilate. S91 is a Mg(2+) binding site. Residue N110 coordinates anthranilate. R165 contributes to the anthranilate binding site. Mg(2+)-binding residues include D224 and E225.

The protein belongs to the anthranilate phosphoribosyltransferase family. Homodimer. Mg(2+) serves as cofactor.

The enzyme catalyses N-(5-phospho-beta-D-ribosyl)anthranilate + diphosphate = 5-phospho-alpha-D-ribose 1-diphosphate + anthranilate. It functions in the pathway amino-acid biosynthesis; L-tryptophan biosynthesis; L-tryptophan from chorismate: step 2/5. Catalyzes the transfer of the phosphoribosyl group of 5-phosphorylribose-1-pyrophosphate (PRPP) to anthranilate to yield N-(5'-phosphoribosyl)-anthranilate (PRA). In Rubrobacter xylanophilus (strain DSM 9941 / JCM 11954 / NBRC 16129 / PRD-1), this protein is Anthranilate phosphoribosyltransferase.